Consider the following 324-residue polypeptide: Probable UDP-sugar transporter protein SLC35A4 (324 aa).

Residues 1–18 (MSVEDGGVPGLARPRQAR) are Cytoplasmic-facing. Residues 19-39 (WTLLLFLSTAMYGAHAPFLAL) traverse the membrane as a helical segment. The Lumenal segment spans residues 40-52 (CHVDGRVPFRPSS). A helical membrane pass occupies residues 53 to 73 (AVLLTELTKLLLCAFSLLVGW). The Cytoplasmic portion of the chain corresponds to 74-85 (QTWPQGTPPWRQ). Residues 86–106 (AVPFALSALLYGANNNLVIYL) traverse the membrane as a helical segment. Topologically, residues 107 to 142 (QRYMDPSTYQVLSNLKIGSTALLYCLCLGHRLSARQ) are lumenal. Residues 143 to 163 (GLALLLLMAAGACYASGGFQE) traverse the membrane as a helical segment. Residues 164 to 180 (PVNTLPGPASAAGAHPM) lie on the Cytoplasmic side of the membrane. A helical transmembrane segment spans residues 181–201 (PLHITPLGLLLLILYCLISGL). Residues 202–214 (SSVYTELIMKRQR) lie on the Lumenal side of the membrane. A helical transmembrane segment spans residues 215-235 (LPLALQNLFLYTFGVILNFGL). Residues 236–248 (YAGSGPGPGFLEG) lie on the Cytoplasmic side of the membrane. Residues 249–271 (FSGWAVLVVLNQAVNGLLMSAVM) form a helical membrane-spanning segment. Residues 272–279 (KHGSSITR) are Lumenal-facing. The chain crosses the membrane as a helical span at residues 280-300 (LFIVSCSLVVNAVLSAVLLQL). Residues 301-324 (QLTAIFFLAALLIGLAVCLYYGSP) are Cytoplasmic-facing.

Belongs to the nucleotide-sugar transporter family. SLC35A subfamily. In terms of assembly, found in a complex with SLC35A2 and SLC35A3.

The protein localises to the golgi apparatus membrane. It catalyses the reaction CDP-L-ribitol(in) + CDP(out) = CDP-L-ribitol(out) + CDP(in). Functionally, mediates the transport of CDP-ribitol. Does not exhibit CMP-sialic acid, UDP-galactose and UDP-N-acetylglucosamine transport activity. In Mus musculus (Mouse), this protein is Probable UDP-sugar transporter protein SLC35A4.